The sequence spans 492 residues: Probable cobyric acid synthase (492 aa).

The region spanning 248–434 (PVRIAVVRLP…MHGLFQNPGA (187 aa)) is the GATase cobBQ-type domain. The active-site Nucleophile is the Cys327. His426 is an active-site residue.

It belongs to the CobB/CobQ family. CobQ subfamily.

The protein operates within cofactor biosynthesis; adenosylcobalamin biosynthesis. Its function is as follows. Catalyzes amidations at positions B, D, E, and G on adenosylcobyrinic A,C-diamide. NH(2) groups are provided by glutamine, and one molecule of ATP is hydrogenolyzed for each amidation. This chain is Probable cobyric acid synthase, found in Methanoculleus marisnigri (strain ATCC 35101 / DSM 1498 / JR1).